Consider the following 252-residue polypeptide: Triosephosphate isomerase (252 aa).

8–10 (NWK) provides a ligand contact to substrate. Residue His95 is the Electrophile of the active site. Glu167 serves as the catalytic Proton acceptor. Residues Gly173, Ser212, and 233–234 (GG) contribute to the substrate site.

It belongs to the triosephosphate isomerase family. As to quaternary structure, homodimer.

Its subcellular location is the cytoplasm. It carries out the reaction D-glyceraldehyde 3-phosphate = dihydroxyacetone phosphate. It participates in carbohydrate biosynthesis; gluconeogenesis. It functions in the pathway carbohydrate degradation; glycolysis; D-glyceraldehyde 3-phosphate from glycerone phosphate: step 1/1. Involved in the gluconeogenesis. Catalyzes stereospecifically the conversion of dihydroxyacetone phosphate (DHAP) to D-glyceraldehyde-3-phosphate (G3P). The polypeptide is Triosephosphate isomerase (Lawsonia intracellularis (strain PHE/MN1-00)).